Consider the following 243-residue polypeptide: DNA repair protein RecO (243 aa).

The protein belongs to the RecO family.

Involved in DNA repair and RecF pathway recombination. The polypeptide is DNA repair protein RecO (Caulobacter vibrioides (strain NA1000 / CB15N) (Caulobacter crescentus)).